Consider the following 336-residue polypeptide: tRNA-modifying protein YgfZ (336 aa).

Trp-28 and Trp-191 together coordinate folate.

It belongs to the tRNA-modifying YgfZ family.

It is found in the cytoplasm. Its function is as follows. Folate-binding protein involved in regulating the level of ATP-DnaA and in the modification of some tRNAs. It is probably a key factor in regulatory networks that act via tRNA modification, such as initiation of chromosomal replication. This chain is tRNA-modifying protein YgfZ, found in Hamiltonella defensa subsp. Acyrthosiphon pisum (strain 5AT).